The following is a 238-amino-acid chain: tRNA1(Val) (adenine(37)-N6)-methyltransferase (238 aa).

It belongs to the methyltransferase superfamily. tRNA (adenine-N(6)-)-methyltransferase family.

The protein resides in the cytoplasm. The enzyme catalyses adenosine(37) in tRNA1(Val) + S-adenosyl-L-methionine = N(6)-methyladenosine(37) in tRNA1(Val) + S-adenosyl-L-homocysteine + H(+). Functionally, specifically methylates the adenine in position 37 of tRNA(1)(Val) (anticodon cmo5UAC). The polypeptide is tRNA1(Val) (adenine(37)-N6)-methyltransferase (Shewanella baltica (strain OS223)).